The following is a 259-amino-acid chain: 4-hydroxy-tetrahydrodipicolinate reductase (259 aa).

Residue 9 to 14 participates in NAD(+) binding; sequence GANGRM. Arginine 37 provides a ligand contact to NADP(+). Residues 92–94 and 116–119 contribute to the NAD(+) site; these read GTT and ASNM. Residue histidine 149 is the Proton donor/acceptor of the active site. A (S)-2,3,4,5-tetrahydrodipicolinate-binding site is contributed by histidine 150. Lysine 153 (proton donor) is an active-site residue. 159–160 contributes to the (S)-2,3,4,5-tetrahydrodipicolinate binding site; sequence GT.

Belongs to the DapB family.

The protein localises to the cytoplasm. It carries out the reaction (S)-2,3,4,5-tetrahydrodipicolinate + NAD(+) + H2O = (2S,4S)-4-hydroxy-2,3,4,5-tetrahydrodipicolinate + NADH + H(+). It catalyses the reaction (S)-2,3,4,5-tetrahydrodipicolinate + NADP(+) + H2O = (2S,4S)-4-hydroxy-2,3,4,5-tetrahydrodipicolinate + NADPH + H(+). Its pathway is amino-acid biosynthesis; L-lysine biosynthesis via DAP pathway; (S)-tetrahydrodipicolinate from L-aspartate: step 4/4. Catalyzes the conversion of 4-hydroxy-tetrahydrodipicolinate (HTPA) to tetrahydrodipicolinate. This chain is 4-hydroxy-tetrahydrodipicolinate reductase, found in Desulfovibrio desulfuricans (strain ATCC 27774 / DSM 6949 / MB).